The primary structure comprises 606 residues: MTSISALSFISTINVSSNSKISHSSVYPFLQKQHQSSKLRKPKRQVTCSSNNNQNNPKEEQELSNIVGHRRNVLIGLGGIYGTLATNPSALASPISPPDLSKCVPPSDLPSGTTPPNINCCPPYSTKITDFKFPSNQPLRVRQAAHLVDNEFLEKYKKATELMKALPSNDPRNFTQQANIHCAYCDGAYSQIGFPDLKLQVHGSWLFFPFHRWYLYFYERILGSLINDPTFALPFWNYDAPDGMQLPTIYADKASPLYDELRNASHQPPTLIDLNFCDIGSDIDRNELIKTNLSIMYRQVYSNGKTSRLFLGNPYRAGDAEPQGAGSIENVPHAPVHTWTGDNTQTNIEDMGIFYSAARDPIFYSHHSNVDRLWYIWKTLGGKKHDFTDKDWLESGFLFYDENKNLVRVNVKDSLDIDKLGYAYQDVPIPWEKAKPVPRRTKVQKLVEVEVNDGNLRKSPTIFLVRQQSPRKYVTFPLVLNNKVSAIVKRPKKLRSKKEKEEEEEVLVIEGIEFYMNIAIKFDVYINDEDDKVGAGNTEFAGSFVNIPHSAHGHKNKKIITSLRLGITDLLEDLHVEGDDNIVVTLVPKCGSGQVKINNVEIVFED.

The N-terminal 92 residues, 1 to 92, are a transit peptide targeting the chloroplast; it reads MTSISALSFI…TLATNPSALA (92 aa). The segment at 32 to 63 is disordered; sequence KQHQSSKLRKPKRQVTCSSNNNQNNPKEEQEL. Residues 35–44 are compositionally biased toward basic residues; that stretch reads QSSKLRKPKR. 2 disulfide bridges follow: cysteine 103–cysteine 121 and cysteine 120–cysteine 182. Positions 181, 202, 211, 333, 337, and 367 each coordinate Cu cation. Residues 185–202 constitute a cross-link (2'-(S-cysteinyl)-histidine (Cys-His)); that stretch reads CDGAYSQIGFPDLKLQVH.

This sequence belongs to the tyrosinase family. It depends on Cu(2+) as a cofactor.

Its subcellular location is the plastid. It is found in the chloroplast thylakoid lumen. The enzyme catalyses 2 catechol + O2 = 2 1,2-benzoquinone + 2 H2O. Catalyzes the oxidation of mono- and o-diphenols to o-diquinones. The chain is Polyphenol oxidase A1, chloroplastic from Vicia faba (Broad bean).